We begin with the raw amino-acid sequence, 787 residues long: MKAAETRILELRAELDQHNYRYHVLDEPSIPDAEYDRLFHELKALEAENPHLVTPDSPTQRVGSAALSAFTQVRHEMAMLSLGNAFEENDLREFDRRVTEGLDLPAGDLFGEGGKVQYSCEPKLDGLAVSLLYRDGALVRGATRGDGTTGEDISVNVRTVRNIPLKLQGKGWPELLEVRGEVFMSKAGFERLNASQLEVGGKTFANPRNAAAGSLRQLDSKITANRPLEFCCYGLGQTSAEIADTHIGVLETLKKWGMPVSRELKLADGVEECLAYYRDIGERRLSLTYEIDGVVFKVNNLAAQRELGFRAREPRWAIAHKFPAMEELTELLDVEFQVGRTGAVTPVARLKPVKVAGVMVANATLHNMDEVARLGLMIGDTVIIRRAGDVIPQVVQVVVERRPETAKPVEVPQSCPVCGSHVERTQLIKRSKGKETVTEGAVYRCVGRLACGAQLKQAIIHYVSRRAMDIEGLGDKTIEQLVDEKLIGSPADLYKLKYEQIIDLEGFAEISSNKLLKAIADSRQPTLARFIYALGIPDVGEETAKVLARSLASLDRVKQALPEVLTYLPDVGLEVAYEIHSFFEDEHNRNVIDALLGECGLQLQDQGELGAEFAASTTLEGLIDKLHIPSVGPGAAQKLADRFGTLEAVISADWLDMRQTLPEKQAKSVRDFFDDNANAERARAIEAQLKDFGMHWRSEKKTVEGLPLAGQTWVLTGSLERMSRDVAKEKLESLGAKVSGSVSAKTHTVVAGPGAGSKLTKANELGLTVLDEEALLKRLTELGVAVD.

NAD(+) contacts are provided by residues 32 to 36 (DAEYD), 81 to 82 (SL), and E121. K123 serves as the catalytic N6-AMP-lysine intermediate. R144, E181, K297, and K321 together coordinate NAD(+). Residues C415, C418, C445, and C451 each coordinate Zn(2+). The BRCT domain maps to 703-787 (VEGLPLAGQT…RLTELGVAVD (85 aa)).

It belongs to the NAD-dependent DNA ligase family. LigA subfamily. It depends on Mg(2+) as a cofactor. Mn(2+) is required as a cofactor.

The enzyme catalyses NAD(+) + (deoxyribonucleotide)n-3'-hydroxyl + 5'-phospho-(deoxyribonucleotide)m = (deoxyribonucleotide)n+m + AMP + beta-nicotinamide D-nucleotide.. DNA ligase that catalyzes the formation of phosphodiester linkages between 5'-phosphoryl and 3'-hydroxyl groups in double-stranded DNA using NAD as a coenzyme and as the energy source for the reaction. It is essential for DNA replication and repair of damaged DNA. The chain is DNA ligase from Pseudomonas syringae pv. tomato (strain ATCC BAA-871 / DC3000).